The primary structure comprises 316 residues: Olfactory receptor 5P79 (316 aa).

At 1-28 the chain is on the extracellular side; the sequence is MGILKDGNHTAVTEFILLGLTDDPVLKV. A glycan (N-linked (GlcNAc...) asparagine) is linked at asparagine 8. Residues 29–49 form a helical membrane-spanning segment; it reads VLFTIILCIYLVTVSGNLSTI. The Cytoplasmic segment spans residues 50–57; the sequence is LLIRVSSQ. Residues 58-78 form a helical membrane-spanning segment; that stretch reads LHHPMYFFLSHLASVDIGISS. Topologically, residues 79–102 are extracellular; that stretch reads SVTPNMLVNFLLERSTISYLGCGI. Cysteines 100 and 192 form a disulfide. The helical transmembrane segment at 103–123 threads the bilayer; that stretch reads QLGSGAFFGSTESFLLAAMAY. Over 124–136 the chain is Cytoplasmic; the sequence is DHFMAICNPLLYS. Residues 137 to 157 form a helical membrane-spanning segment; the sequence is TKMSTQVCIQLLVGSYIGGFL. The Extracellular portion of the chain corresponds to 158-199; sequence NASSFILSFFSFLFCGPNKVNHFFCDFTPLVELSCSDNSVLL. Residues 200–220 form a helical membrane-spanning segment; the sequence is ILDSFSAGSIIVITVLVIAIS. The Cytoplasmic segment spans residues 221-240; the sequence is YTYILITILKMHSTEGRHKA. A helical transmembrane segment spans residues 241 to 261; the sequence is FSTCTSHLTAVTVFYGTVTFI. Residues 262–274 are Extracellular-facing; sequence YVMPKSSYSTDQN. A helical membrane pass occupies residues 275-297; it reads KVLSVFYMIAIAIPMLNPLIYSL. Residues 298-316 lie on the Cytoplasmic side of the membrane; it reads RNNEIKNALKRQLSKKTFS.

This sequence belongs to the G-protein coupled receptor 1 family.

It localises to the cell membrane. Its function is as follows. Potential odorant receptor. The sequence is that of Olfactory receptor 5P79 from Mus musculus (Mouse).